Consider the following 156-residue polypeptide: ATP synthase subunit b (156 aa).

Residues Leu-5–Val-25 form a helical membrane-spanning segment.

The protein belongs to the ATPase B chain family. In terms of assembly, F-type ATPases have 2 components, F(1) - the catalytic core - and F(0) - the membrane proton channel. F(1) has five subunits: alpha(3), beta(3), gamma(1), delta(1), epsilon(1). F(0) has three main subunits: a(1), b(2) and c(10-14). The alpha and beta chains form an alternating ring which encloses part of the gamma chain. F(1) is attached to F(0) by a central stalk formed by the gamma and epsilon chains, while a peripheral stalk is formed by the delta and b chains.

It localises to the cell inner membrane. Functionally, f(1)F(0) ATP synthase produces ATP from ADP in the presence of a proton or sodium gradient. F-type ATPases consist of two structural domains, F(1) containing the extramembraneous catalytic core and F(0) containing the membrane proton channel, linked together by a central stalk and a peripheral stalk. During catalysis, ATP synthesis in the catalytic domain of F(1) is coupled via a rotary mechanism of the central stalk subunits to proton translocation. Its function is as follows. Component of the F(0) channel, it forms part of the peripheral stalk, linking F(1) to F(0). This chain is ATP synthase subunit b, found in Hahella chejuensis (strain KCTC 2396).